Consider the following 96-residue polypeptide: uncharacterized protein (96 aa).

Residues 9–86 adopt a coiled-coil conformation; that stretch reads EELKSQAQVY…NKYADTVAER (78 aa).

The protein belongs to the WXG100 family. sagEsxA-like subfamily.

This is an uncharacterized protein from Clostridium acetobutylicum (strain ATCC 824 / DSM 792 / JCM 1419 / IAM 19013 / LMG 5710 / NBRC 13948 / NRRL B-527 / VKM B-1787 / 2291 / W).